The primary structure comprises 403 residues: Phosphopentomutase 2 (403 aa).

The Mn(2+) site is built by aspartate 13, aspartate 298, histidine 303, aspartate 339, histidine 340, and histidine 351.

It belongs to the phosphopentomutase family. Mn(2+) serves as cofactor.

It is found in the cytoplasm. The enzyme catalyses 2-deoxy-alpha-D-ribose 1-phosphate = 2-deoxy-D-ribose 5-phosphate. It carries out the reaction alpha-D-ribose 1-phosphate = D-ribose 5-phosphate. It participates in carbohydrate degradation; 2-deoxy-D-ribose 1-phosphate degradation; D-glyceraldehyde 3-phosphate and acetaldehyde from 2-deoxy-alpha-D-ribose 1-phosphate: step 1/2. Isomerase that catalyzes the conversion of deoxy-ribose 1-phosphate (dRib-1-P) and ribose 1-phosphate (Rib-1-P) to deoxy-ribose 5-phosphate (dRib-5-P) and ribose 5-phosphate (Rib-5-P), respectively. The protein is Phosphopentomutase 2 of Streptococcus agalactiae serotype Ia (strain ATCC 27591 / A909 / CDC SS700).